Reading from the N-terminus, the 282-residue chain is Glucuronoxylan 4-O-methyltransferase 1 (282 aa).

Residues 13-33 form a helical membrane-spanning segment; it reads VLLVFLLATLILIFIVRSTLT.

Belongs to the methyltransferase superfamily. As to expression, expressed in rosette leaves, stems, flowers and siliques.

The protein localises to the golgi apparatus membrane. It carries out the reaction glucuronoxylan D-glucuronate + n S-adenosyl-L-methionine = glucuronoxylan 4-O-methyl-D-glucuronate + n S-adenosyl-L-homocysteine + n H(+). Methyltransferase catalyzing 4-O-methylation of glucuronic acid side chains on xylan. The polypeptide is Glucuronoxylan 4-O-methyltransferase 1 (GXM1) (Arabidopsis thaliana (Mouse-ear cress)).